The following is a 161-amino-acid chain: Nucleotide-binding protein Csal_2524 (161 aa).

It belongs to the YajQ family.

Nucleotide-binding protein. This Chromohalobacter salexigens (strain ATCC BAA-138 / DSM 3043 / CIP 106854 / NCIMB 13768 / 1H11) protein is Nucleotide-binding protein Csal_2524.